Consider the following 401-residue polypeptide: Riboflavin biosynthesis protein RibBA (401 aa).

The DHBP synthase stretch occupies residues 1 to 203; the sequence is MTDFQFSKVE…IQQLQEYRRK (203 aa). D-ribulose 5-phosphate is bound by residues 30 to 31, Asp35, 142 to 146, and Glu166; these read RE and RNGHT. Glu31 is a binding site for Mg(2+). Residue His145 participates in Mg(2+) binding. Positions 204–401 are GTP cyclohydrolase II; it reads HDSLVKQISV…QIKMGHMFNF (198 aa). Residue 254–258 coordinates GTP; it reads RIHSE. The Zn(2+) site is built by Cys259, Cys270, and Cys272. Residues Gln275, 297 to 299, and Thr319 contribute to the GTP site; that span reads EGR. Asp331 acts as the Proton acceptor; for GTP cyclohydrolase activity in catalysis. Arg333 functions as the Nucleophile; for GTP cyclohydrolase activity in the catalytic mechanism. The GTP site is built by Thr354 and Lys359.

In the N-terminal section; belongs to the DHBP synthase family. It in the C-terminal section; belongs to the GTP cyclohydrolase II family. The cofactor is Mg(2+). Mn(2+) is required as a cofactor. Requires Zn(2+) as cofactor.

The catalysed reaction is D-ribulose 5-phosphate = (2S)-2-hydroxy-3-oxobutyl phosphate + formate + H(+). It catalyses the reaction GTP + 4 H2O = 2,5-diamino-6-hydroxy-4-(5-phosphoribosylamino)-pyrimidine + formate + 2 phosphate + 3 H(+). Its pathway is cofactor biosynthesis; riboflavin biosynthesis; 2-hydroxy-3-oxobutyl phosphate from D-ribulose 5-phosphate: step 1/1. The protein operates within cofactor biosynthesis; riboflavin biosynthesis; 5-amino-6-(D-ribitylamino)uracil from GTP: step 1/4. Its function is as follows. Catalyzes the conversion of D-ribulose 5-phosphate to formate and 3,4-dihydroxy-2-butanone 4-phosphate. Functionally, catalyzes the conversion of GTP to 2,5-diamino-6-ribosylamino-4(3H)-pyrimidinone 5'-phosphate (DARP), formate and pyrophosphate. The protein is Riboflavin biosynthesis protein RibBA of Actinobacillus pleuropneumoniae serotype 3 (strain JL03).